A 754-amino-acid polypeptide reads, in one-letter code: 5-methyltetrahydropteroyltriglutamate--homocysteine methyltransferase (754 aa).

5-methyltetrahydropteroyltri-L-glutamate contacts are provided by residues 17-20 and K117; that span reads RELK. L-homocysteine-binding positions include 431 to 433 and E484; that span reads IGS. L-methionine is bound by residues 431–433 and E484; that span reads IGS. 5-methyltetrahydropteroyltri-L-glutamate is bound by residues 515-516 and W561; that span reads RC. Position 599 (D599) interacts with L-homocysteine. D599 is an L-methionine binding site. Residue E605 coordinates 5-methyltetrahydropteroyltri-L-glutamate. H641, C643, and E665 together coordinate Zn(2+). H694 serves as the catalytic Proton donor. Position 726 (C726) interacts with Zn(2+).

The protein belongs to the vitamin-B12 independent methionine synthase family. It depends on Zn(2+) as a cofactor.

The enzyme catalyses 5-methyltetrahydropteroyltri-L-glutamate + L-homocysteine = tetrahydropteroyltri-L-glutamate + L-methionine. Its pathway is amino-acid biosynthesis; L-methionine biosynthesis via de novo pathway; L-methionine from L-homocysteine (MetE route): step 1/1. In terms of biological role, catalyzes the transfer of a methyl group from 5-methyltetrahydrofolate to homocysteine resulting in methionine formation. The sequence is that of 5-methyltetrahydropteroyltriglutamate--homocysteine methyltransferase from Salmonella arizonae (strain ATCC BAA-731 / CDC346-86 / RSK2980).